Reading from the N-terminus, the 238-residue chain is Sugar fermentation stimulation protein homolog (238 aa).

Belongs to the SfsA family.

This chain is Sugar fermentation stimulation protein homolog, found in Klebsiella pneumoniae (strain 342).